The sequence spans 370 residues: MQVYMLLPLAVFASLTYQGACEETAAAQTSSDASTSSASSEHAENELSRAKRGSYRMMRLGRGLHMLRLGKRGGPVEPESEENLETLLNLLQGYYSDVPEYPSEFDDTDLAYPYEEYDAPAHPRYRRSTPPTDGVVAPDVLQKGSSEFEDFGDSQLDESDEGYYGYDPENYLYGDFEDYLEPEEGGLGEEKRSLSMLRLGKRGLSMLRLGKREGEEGDEMDKKQDESLNDDFENDDIKRTLSMLRLGKRPMSMLRLGKRPMSMLRLGKRPMSMLRLGKRPMSMLRLGKRPMSMLRLGKRPMSMLRLGKRPMSMLRLGKRPMSMLRLGKRPMSMLRLGKRPMSMLRLGKRDDDEKEKKSLNMSRLGKRSTQ.

Positions 1–18 (MQVYMLLPLAVFASLTYQ) are cleaved as a signal peptide. Positions 19-50 (GACEETAAAQTSSDASTSSASSEHAENELSRA) are excised as a propeptide. The segment covering 28 to 40 (QTSSDASTSSASS) has biased composition (low complexity). A disordered region spans residues 28-52 (QTSSDASTSSASSEHAENELSRAKR). A leucine amide mark is found at Leu60 and Leu69. A propeptide spanning residues 73-190 (GGPVEPESEE…EPEEGGLGEE (118 aa)) is cleaved from the precursor. Leucine amide is present on residues Leu199 and Leu209. The span at 210-226 (GKREGEEGDEMDKKQDE) shows a compositional bias: basic and acidic residues. Residues 210-230 (GKREGEEGDEMDKKQDESLND) form a disordered region. The propeptide occupies 213–237 (EGEEGDEMDKKQDESLNDDFENDDI). 11 positions are modified to leucine amide: Leu246, Leu256, Leu266, Leu276, Leu286, Leu296, Leu306, Leu316, Leu326, Leu336, and Leu346. Residues 344–370 (LRLGKRDDDEKEKKSLNMSRLGKRSTQ) form a disordered region. Positions 347 to 358 (GKRDDDEKEKKS) are enriched in basic and acidic residues. The propeptide occupies 350–355 (DDDEKE). Leu364 carries the leucine amide modification. Residues 368–370 (STQ) constitute a propeptide that is removed on maturation.

As to expression, expressed in all ganglia of the CNS, but only in a subset of neurons including L10 in the abdominal ganglion and B16 in the buccal ganglion.

The protein localises to the secreted. In terms of biological role, exogenous application of myomodulins potentiates ARC muscle contraction. The polypeptide is Myomodulin neuropeptides 1 (MYOMOD1) (Aplysia californica (California sea hare)).